A 391-amino-acid polypeptide reads, in one-letter code: U-box domain-containing protein 57 (391 aa).

An MIF4G domain is found at 1–178 (MVKNSYVLFA…DLTERLLQVE (178 aa)). Positions 322 to 391 (QPPPSFICPI…LRSAIEELGR (70 aa)) constitute a U-box domain.

It catalyses the reaction S-ubiquitinyl-[E2 ubiquitin-conjugating enzyme]-L-cysteine + [acceptor protein]-L-lysine = [E2 ubiquitin-conjugating enzyme]-L-cysteine + N(6)-ubiquitinyl-[acceptor protein]-L-lysine.. Its pathway is protein modification; protein ubiquitination. Its function is as follows. Functions as an E3 ubiquitin ligase. The chain is U-box domain-containing protein 57 (PUB57) from Arabidopsis thaliana (Mouse-ear cress).